The chain runs to 309 residues: tRNA pseudouridine synthase B (309 aa).

The active-site Nucleophile is the Asp40.

This sequence belongs to the pseudouridine synthase TruB family. Type 1 subfamily.

The enzyme catalyses uridine(55) in tRNA = pseudouridine(55) in tRNA. Responsible for synthesis of pseudouridine from uracil-55 in the psi GC loop of transfer RNAs. The chain is tRNA pseudouridine synthase B from Mycobacterium avium (strain 104).